A 320-amino-acid polypeptide reads, in one-letter code: uncharacterized protein (320 aa).

One can recognise an FHA domain in the interval 22-86 (KTIGRSSSFD…IRDLNNKTGT (65 aa)). The segment at 242–264 (TDTDTTEEKEEEEEKEEGDDEEG) is disordered.

This is an uncharacterized protein from Saccharomyces cerevisiae (strain ATCC 204508 / S288c) (Baker's yeast).